A 302-amino-acid chain; its full sequence is 33 kDa chaperonin (302 aa).

Intrachain disulfides connect Cys-234-Cys-236 and Cys-267-Cys-270.

Belongs to the HSP33 family. Under oxidizing conditions two disulfide bonds are formed involving the reactive cysteines. Under reducing conditions zinc is bound to the reactive cysteines and the protein is inactive.

The protein resides in the cytoplasm. Redox regulated molecular chaperone. Protects both thermally unfolding and oxidatively damaged proteins from irreversible aggregation. Plays an important role in the bacterial defense system toward oxidative stress. This Neisseria gonorrhoeae (strain ATCC 700825 / FA 1090) protein is 33 kDa chaperonin.